The sequence spans 427 residues: UDP-N-acetylglucosamine 1-carboxyvinyltransferase (427 aa).

A phosphoenolpyruvate-binding site is contributed by 22-23; it reads KN. Arginine 99 contributes to the UDP-N-acetyl-alpha-D-glucosamine binding site. Catalysis depends on cysteine 123, which acts as the Proton donor. Residue cysteine 123 is modified to 2-(S-cysteinyl)pyruvic acid O-phosphothioketal. UDP-N-acetyl-alpha-D-glucosamine is bound by residues 128 to 132, aspartate 313, and isoleucine 335; that span reads RPIDL.

This sequence belongs to the EPSP synthase family. MurA subfamily.

It is found in the cytoplasm. The enzyme catalyses phosphoenolpyruvate + UDP-N-acetyl-alpha-D-glucosamine = UDP-N-acetyl-3-O-(1-carboxyvinyl)-alpha-D-glucosamine + phosphate. The protein operates within cell wall biogenesis; peptidoglycan biosynthesis. Cell wall formation. Adds enolpyruvyl to UDP-N-acetylglucosamine. The polypeptide is UDP-N-acetylglucosamine 1-carboxyvinyltransferase (Novosphingobium aromaticivorans (strain ATCC 700278 / DSM 12444 / CCUG 56034 / CIP 105152 / NBRC 16084 / F199)).